We begin with the raw amino-acid sequence, 282 residues long: MAAQVLSGHEAAEAVYEEIRARLRSLSFTPSLRVIRLGEDPASVAYVRLKDKRARALGYRSQVEVYPEDLPEEALLERIAALNADEEVDGILVQLPLPPHIRTQRVLEAIHPLKDVDGFHPLNVGRLWSGGKGLFPCTPLGVVRLLKHYGVDLRGKEVVVVGRSNIVGKPLAGLLLREDATVTLAHSKTQDLPQVTRRAQVLVVAVGRPHLVRKEWVREGAIVVDVGVNRVEGRLLGDVHPEVAEVASALTPVPGGVGPMTVAMLMGNTLEAALLRRHGASG.

Residues 162 to 164 (GRS), S187, and V228 each bind NADP(+).

This sequence belongs to the tetrahydrofolate dehydrogenase/cyclohydrolase family. Homodimer.

The enzyme catalyses (6R)-5,10-methylene-5,6,7,8-tetrahydrofolate + NADP(+) = (6R)-5,10-methenyltetrahydrofolate + NADPH. The catalysed reaction is (6R)-5,10-methenyltetrahydrofolate + H2O = (6R)-10-formyltetrahydrofolate + H(+). The protein operates within one-carbon metabolism; tetrahydrofolate interconversion. Its function is as follows. Catalyzes the oxidation of 5,10-methylenetetrahydrofolate to 5,10-methenyltetrahydrofolate and then the hydrolysis of 5,10-methenyltetrahydrofolate to 10-formyltetrahydrofolate. The sequence is that of Bifunctional protein FolD from Thermus thermophilus (strain ATCC BAA-163 / DSM 7039 / HB27).